A 345-amino-acid polypeptide reads, in one-letter code: Methionine import ATP-binding protein MetN (345 aa).

In terms of domain architecture, ABC transporter spans 2-241 (IKLKNISKVF…PKTLLAQEFI (240 aa)). Position 38–45 (38–45 (GASGAGKS)) interacts with ATP.

It belongs to the ABC transporter superfamily. Methionine importer (TC 3.A.1.24) family. As to quaternary structure, the complex is composed of two ATP-binding proteins (MetN), two transmembrane proteins (MetI) and a solute-binding protein (MetQ).

The protein localises to the cell inner membrane. The enzyme catalyses L-methionine(out) + ATP + H2O = L-methionine(in) + ADP + phosphate + H(+). It carries out the reaction D-methionine(out) + ATP + H2O = D-methionine(in) + ADP + phosphate + H(+). Functionally, part of the ABC transporter complex MetNIQ involved in methionine import. Responsible for energy coupling to the transport system. This chain is Methionine import ATP-binding protein MetN, found in Histophilus somni (strain 129Pt) (Haemophilus somnus).